Consider the following 284-residue polypeptide: Pantothenate synthetase (284 aa).

Position 30–37 (30–37) interacts with ATP; sequence MGNLHQGH. H37 serves as the catalytic Proton donor. Q61 lines the (R)-pantoate pocket. Position 61 (Q61) interacts with beta-alanine. 149-152 is an ATP binding site; it reads GQKD. Q155 provides a ligand contact to (R)-pantoate. ATP contacts are provided by residues V178 and 186 to 189; that span reads LSSR.

Belongs to the pantothenate synthetase family. In terms of assembly, homodimer.

The protein resides in the cytoplasm. The enzyme catalyses (R)-pantoate + beta-alanine + ATP = (R)-pantothenate + AMP + diphosphate + H(+). It participates in cofactor biosynthesis; (R)-pantothenate biosynthesis; (R)-pantothenate from (R)-pantoate and beta-alanine: step 1/1. Functionally, catalyzes the condensation of pantoate with beta-alanine in an ATP-dependent reaction via a pantoyl-adenylate intermediate. The chain is Pantothenate synthetase from Aeromonas salmonicida (strain A449).